The primary structure comprises 493 residues: Probable cytochrome P450 6a13 (493 aa).

Heme is bound at residue cysteine 435.

The protein belongs to the cytochrome P450 family. Heme serves as cofactor.

The protein resides in the endoplasmic reticulum membrane. Its subcellular location is the microsome membrane. In terms of biological role, may be involved in the metabolism of insect hormones and in the breakdown of synthetic insecticides. The polypeptide is Probable cytochrome P450 6a13 (Cyp6a13) (Drosophila melanogaster (Fruit fly)).